The sequence spans 199 residues: Hematopoietic prostaglandin D synthase (199 aa).

The region spanning 2-79 (PNYKLTYFNM…YLTKNTDLAG (78 aa)) is the GST N-terminal domain. Residues Tyr8, Arg14, Trp39, 49-51 (GKI), and 63-64 (QS) contribute to the glutathione site. The GST C-terminal domain occupies 81–199 (TEMEQCHVDA…WIKRRPQTKL (119 aa)).

The protein belongs to the GST superfamily. Sigma family. As to quaternary structure, homodimer. Glutathione is required as a cofactor. Expressed in a number of megakaryocytic cell lines but not in platelets. Highly expressed in adipose tissue, macrophages and placenta. Also expressed at lower levels in lung, heart, lymph nodes, appendix, bone marrow and fetal liver.

The protein localises to the cytoplasm. It catalyses the reaction prostaglandin H2 = prostaglandin D2. The catalysed reaction is RX + glutathione = an S-substituted glutathione + a halide anion + H(+). It carries out the reaction 2-glyceryl-prostaglandin H2 = 2-glyceryl-prostaglandin D2. Its activity is regulated as follows. Prostaglandin PGD2 synthesis is stimulated by calcium and magnesium ions. One calcium or magnesium ion is bound between the subunits of the homodimer. The interactions with the protein are for the most part mediated via water molecules. Magnesium increases the affinity for glutathione, while calcium has no effect on the affinity for glutathione. Its function is as follows. Bifunctional enzyme which catalyzes both the conversion of PGH2 to PGD2, a prostaglandin involved in smooth muscle contraction/relaxation and a potent inhibitor of platelet aggregation, and the conjugation of glutathione with a wide range of aryl halides and organic isothiocyanates. Also exhibits low glutathione-peroxidase activity towards cumene hydroperoxide. The chain is Hematopoietic prostaglandin D synthase from Homo sapiens (Human).